A 97-amino-acid polypeptide reads, in one-letter code: Large ribosomal subunit protein eL21 (97 aa).

A compositionally biased stretch (polar residues) spans methionine 1 to arginine 12. The tract at residues methionine 1–aspartate 35 is disordered.

It belongs to the eukaryotic ribosomal protein eL21 family.

The chain is Large ribosomal subunit protein eL21 from Natronomonas pharaonis (strain ATCC 35678 / DSM 2160 / CIP 103997 / JCM 8858 / NBRC 14720 / NCIMB 2260 / Gabara) (Halobacterium pharaonis).